We begin with the raw amino-acid sequence, 169 residues long: MQNTIRIVGIDPGLRRTGWGIIETSGNSLRFVASGTVTSDGDMDLASRLCQLHDGLAEIVHSYKPDEAAVEQTFVNKDAVATLKLGQARGIAMLVPARAGLPVSEYAPNAVKKAVIGVGHGEKQQIHMMLKILMPKVEFKGNDAADALAIAICHAHNRGSNRMRQALAG.

Active-site residues include aspartate 11, glutamate 71, and aspartate 143. Mg(2+) is bound by residues aspartate 11, glutamate 71, and aspartate 143.

The protein belongs to the RuvC family. As to quaternary structure, homodimer which binds Holliday junction (HJ) DNA. The HJ becomes 2-fold symmetrical on binding to RuvC with unstacked arms; it has a different conformation from HJ DNA in complex with RuvA. In the full resolvosome a probable DNA-RuvA(4)-RuvB(12)-RuvC(2) complex forms which resolves the HJ. It depends on Mg(2+) as a cofactor.

The protein localises to the cytoplasm. It carries out the reaction Endonucleolytic cleavage at a junction such as a reciprocal single-stranded crossover between two homologous DNA duplexes (Holliday junction).. The RuvA-RuvB-RuvC complex processes Holliday junction (HJ) DNA during genetic recombination and DNA repair. Endonuclease that resolves HJ intermediates. Cleaves cruciform DNA by making single-stranded nicks across the HJ at symmetrical positions within the homologous arms, yielding a 5'-phosphate and a 3'-hydroxyl group; requires a central core of homology in the junction. The consensus cleavage sequence is 5'-(A/T)TT(C/G)-3'. Cleavage occurs on the 3'-side of the TT dinucleotide at the point of strand exchange. HJ branch migration catalyzed by RuvA-RuvB allows RuvC to scan DNA until it finds its consensus sequence, where it cleaves and resolves the cruciform DNA. The sequence is that of Crossover junction endodeoxyribonuclease RuvC from Rhizobium johnstonii (strain DSM 114642 / LMG 32736 / 3841) (Rhizobium leguminosarum bv. viciae).